A 313-amino-acid chain; its full sequence is 4-hydroxy-3-methylbut-2-enyl diphosphate reductase (313 aa).

Residue Cys-20 participates in [4Fe-4S] cluster binding. His-49 and His-82 together coordinate (2E)-4-hydroxy-3-methylbut-2-enyl diphosphate. His-49 and His-82 together coordinate dimethylallyl diphosphate. The isopentenyl diphosphate site is built by His-49 and His-82. Residue Cys-104 coordinates [4Fe-4S] cluster. His-132 contacts (2E)-4-hydroxy-3-methylbut-2-enyl diphosphate. Residue His-132 coordinates dimethylallyl diphosphate. His-132 lines the isopentenyl diphosphate pocket. The active-site Proton donor is the Glu-134. (2E)-4-hydroxy-3-methylbut-2-enyl diphosphate is bound at residue Thr-172. Cys-201 contributes to the [4Fe-4S] cluster binding site. (2E)-4-hydroxy-3-methylbut-2-enyl diphosphate-binding residues include Ser-229, Ser-230, Asn-231, and Ser-273. Ser-229, Ser-230, Asn-231, and Ser-273 together coordinate dimethylallyl diphosphate. Residues Ser-229, Ser-230, Asn-231, and Ser-273 each coordinate isopentenyl diphosphate.

The protein belongs to the IspH family. Requires [4Fe-4S] cluster as cofactor.

It catalyses the reaction isopentenyl diphosphate + 2 oxidized [2Fe-2S]-[ferredoxin] + H2O = (2E)-4-hydroxy-3-methylbut-2-enyl diphosphate + 2 reduced [2Fe-2S]-[ferredoxin] + 2 H(+). It carries out the reaction dimethylallyl diphosphate + 2 oxidized [2Fe-2S]-[ferredoxin] + H2O = (2E)-4-hydroxy-3-methylbut-2-enyl diphosphate + 2 reduced [2Fe-2S]-[ferredoxin] + 2 H(+). Its pathway is isoprenoid biosynthesis; dimethylallyl diphosphate biosynthesis; dimethylallyl diphosphate from (2E)-4-hydroxy-3-methylbutenyl diphosphate: step 1/1. The protein operates within isoprenoid biosynthesis; isopentenyl diphosphate biosynthesis via DXP pathway; isopentenyl diphosphate from 1-deoxy-D-xylulose 5-phosphate: step 6/6. Its function is as follows. Catalyzes the conversion of 1-hydroxy-2-methyl-2-(E)-butenyl 4-diphosphate (HMBPP) into a mixture of isopentenyl diphosphate (IPP) and dimethylallyl diphosphate (DMAPP). Acts in the terminal step of the DOXP/MEP pathway for isoprenoid precursor biosynthesis. The sequence is that of 4-hydroxy-3-methylbut-2-enyl diphosphate reductase from Desulfotalea psychrophila (strain LSv54 / DSM 12343).